A 196-amino-acid chain; its full sequence is Glycerol-3-phosphate acyltransferase (196 aa).

4 helical membrane passes run 4 to 24, 80 to 100, 114 to 134, and 155 to 175; these read LTLL…AVVI, PFFL…PLYF, AMFP…LLVF, and AYWI…LILW.

It belongs to the PlsY family. Probably interacts with PlsX.

It is found in the cell inner membrane. It catalyses the reaction an acyl phosphate + sn-glycerol 3-phosphate = a 1-acyl-sn-glycero-3-phosphate + phosphate. Its pathway is lipid metabolism; phospholipid metabolism. Catalyzes the transfer of an acyl group from acyl-phosphate (acyl-PO(4)) to glycerol-3-phosphate (G3P) to form lysophosphatidic acid (LPA). This enzyme utilizes acyl-phosphate as fatty acyl donor, but not acyl-CoA or acyl-ACP. This Idiomarina loihiensis (strain ATCC BAA-735 / DSM 15497 / L2-TR) protein is Glycerol-3-phosphate acyltransferase.